The chain runs to 453 residues: MKPRFPQNVYFLARYSYLRRFQHSQRRTFSSFLNNIRSNYSGARASPLGGSSGAGAGAGGGGTGDSKGNAFLVPGATMATILMLGALHARRLYEDKKIEEKREKGIELEFHPDIKASFLGVLPLRSISRAWGSFMSLEIPVWMRPYAYKAWARAFHSNLEEAALPLEEYTSLQDFFVRSLKEGCRPIDPDPCCLVSPVDGTVLRFGELKGNRGMIEQVKGHSYSVPALLGNNSLLPMEPEGKNESKEEAVGDKSDKSWLRVSLASPKLRENVSASPMKGLYYCVIYLKPGDYHRIHSPADWNATVRRHFAGRLFPVNERATRTIRNLYVENERVVLEGIWKEGFMALAAVGATNIGSIELFIEPELRTNKPKKKLFPTEPPEERVYDPEGLGLRLEKGKEVAVFNMGSTVVLIFQAPTANTPEGSSSSSDYRFCVKQGDRVRVGQALGRWKEE.

The N-terminal 29 residues, 1–29 (MKPRFPQNVYFLARYSYLRRFQHSQRRTF), are a transit peptide targeting the mitochondrion. The Mitochondrial matrix segment spans residues 30 to 74 (SSFLNNIRSNYSGARASPLGGSSGAGAGAGGGGTGDSKGNAFLVP). Residues 75–93 (GATMATILMLGALHARRLY) traverse the membrane as a helical segment. Residues 94–453 (EDKKIEEKRE…GQALGRWKEE (360 aa)) lie on the Mitochondrial intermembrane side of the membrane. Residues Asp199, His296, and Ser408 each act as charge relay system; for autoendoproteolytic cleavage activity in the active site. Ser408 functions as the Schiff-base intermediate with substrate; via pyruvic acid; for decarboxylase activity in the catalytic mechanism. Residue Ser408 is modified to Pyruvic acid (Ser); by autocatalysis.

It belongs to the phosphatidylserine decarboxylase family. PSD-B subfamily. Eukaryotic type I sub-subfamily. In terms of assembly, heterodimer of a large membrane-associated beta subunit and a small pyruvoyl-containing alpha subunit. Requires pyruvate as cofactor. Is synthesized initially as an inactive proenzyme. Formation of the active enzyme involves a self-maturation process in which the active site pyruvoyl group is generated from an internal serine residue via an autocatalytic post-translational modification. Two non-identical subunits are generated from the proenzyme in this reaction, and the pyruvate is formed at the N-terminus of the alpha chain, which is derived from the carboxyl end of the proenzyme. The autoendoproteolytic cleavage occurs by a canonical serine protease mechanism, in which the side chain hydroxyl group of the serine supplies its oxygen atom to form the C-terminus of the beta chain, while the remainder of the serine residue undergoes an oxidative deamination to produce ammonia and the pyruvoyl prosthetic group on the alpha chain. During this reaction, the Ser that is part of the protease active site of the proenzyme becomes the pyruvoyl prosthetic group, which constitutes an essential element of the active site of the mature decarboxylase. Expressed in roots, leaves, stems and flowers.

The protein localises to the mitochondrion. The protein resides in the mitochondrion inner membrane. It catalyses the reaction a 1,2-diacyl-sn-glycero-3-phospho-L-serine + H(+) = a 1,2-diacyl-sn-glycero-3-phosphoethanolamine + CO2. It functions in the pathway phospholipid metabolism; phosphatidylethanolamine biosynthesis; phosphatidylethanolamine from CDP-diacylglycerol: step 2/2. Its function is as follows. Catalyzes the formation of phosphatidylethanolamine (PtdEtn) from phosphatidylserine (PtdSer). Plays a central role in phospholipid metabolism and in the interorganelle trafficking of phosphatidylserine. Contributes only to a minor proportion of PtdEtn production. The polypeptide is Phosphatidylserine decarboxylase proenzyme 1, mitochondrial (PSD1) (Arabidopsis thaliana (Mouse-ear cress)).